Consider the following 72-residue polypeptide: Alpha-elapitoxin-Dpp2c (72 aa).

Intrachain disulfides connect Cys3–Cys21, Cys14–Cys42, Cys27–Cys31, Cys46–Cys57, and Cys58–Cys63.

Belongs to the three-finger toxin family. Long-chain subfamily. Type II alpha-neurotoxin sub-subfamily. In terms of tissue distribution, expressed by the venom gland.

The protein resides in the secreted. Its function is as follows. Binds with high affinity to muscular (alpha-1/CHRNA1) and neuronal (alpha-7/CHRNA7) nicotinic acetylcholine receptor (nAChR) and inhibits acetylcholine from binding to the receptor, thereby impairing neuromuscular and neuronal transmission. In Dendroaspis polylepis polylepis (Black mamba), this protein is Alpha-elapitoxin-Dpp2c.